The chain runs to 384 residues: Glucans biosynthesis protein C (384 aa).

10 helical membrane passes run 17–37, 54–74, 91–111, 140–160, 173–193, 212–232, 240–260, 274–294, 311–331, and 338–358; these read AWLM…THSW, FIHA…SYML, VGIP…ILLQ, LWFL…FTWF, AISL…YAAI, FIVM…LAFI, FTTP…AYLL, TESV…FSLG, ASLF…AYIT, and LIGF…LYEI.

Belongs to the acyltransferase 3 family. OpgC subfamily.

It localises to the cell membrane. The protein operates within glycan metabolism; osmoregulated periplasmic glucan (OPG) biosynthesis. Its function is as follows. Necessary for the succinyl substitution of periplasmic glucans. Could catalyze the transfer of succinyl residues from the cytoplasmic side of the membrane to the nascent glucan backbones on the periplasmic side of the membrane. In Salmonella heidelberg (strain SL476), this protein is Glucans biosynthesis protein C.